The chain runs to 310 residues: ADP-L-glycero-D-manno-heptose-6-epimerase (310 aa).

Residues Phe-10–Ile-11, Asp-31–Asn-32, Lys-38, Lys-53, Glu-75–Ser-79, and Asn-92 contribute to the NADP(+) site. The active-site Proton acceptor is Tyr-140. Position 144 (Lys-144) interacts with NADP(+). Position 169 (Asn-169) interacts with substrate. Positions 170 and 178 each coordinate NADP(+). Lys-178 functions as the Proton acceptor in the catalytic mechanism. Substrate is bound by residues Ser-180, His-187, Phe-201–Ser-204, Arg-209, and Tyr-272.

Belongs to the NAD(P)-dependent epimerase/dehydratase family. HldD subfamily. In terms of assembly, homopentamer. It depends on NADP(+) as a cofactor.

The catalysed reaction is ADP-D-glycero-beta-D-manno-heptose = ADP-L-glycero-beta-D-manno-heptose. Its pathway is nucleotide-sugar biosynthesis; ADP-L-glycero-beta-D-manno-heptose biosynthesis; ADP-L-glycero-beta-D-manno-heptose from D-glycero-beta-D-manno-heptose 7-phosphate: step 4/4. It participates in bacterial outer membrane biogenesis; LPS core biosynthesis. In terms of biological role, catalyzes the interconversion between ADP-D-glycero-beta-D-manno-heptose and ADP-L-glycero-beta-D-manno-heptose via an epimerization at carbon 6 of the heptose. This chain is ADP-L-glycero-D-manno-heptose-6-epimerase, found in Klebsiella pneumoniae.